We begin with the raw amino-acid sequence, 142 residues long: Large ribosomal subunit protein uL11 (142 aa).

Belongs to the universal ribosomal protein uL11 family. Part of the ribosomal stalk of the 50S ribosomal subunit. Interacts with L10 and the large rRNA to form the base of the stalk. L10 forms an elongated spine to which L12 dimers bind in a sequential fashion forming a multimeric L10(L12)X complex. One or more lysine residues are methylated.

Functionally, forms part of the ribosomal stalk which helps the ribosome interact with GTP-bound translation factors. The polypeptide is Large ribosomal subunit protein uL11 (Mesorhizobium japonicum (strain LMG 29417 / CECT 9101 / MAFF 303099) (Mesorhizobium loti (strain MAFF 303099))).